The following is a 54-amino-acid chain: Large ribosomal subunit protein bL33 (54 aa).

The protein belongs to the bacterial ribosomal protein bL33 family.

In Parafrankia sp. (strain EAN1pec), this protein is Large ribosomal subunit protein bL33.